The chain runs to 86 residues: Small ribosomal subunit protein bS16 (86 aa).

The protein belongs to the bacterial ribosomal protein bS16 family.

This Borreliella burgdorferi (strain ATCC 35210 / DSM 4680 / CIP 102532 / B31) (Borrelia burgdorferi) protein is Small ribosomal subunit protein bS16.